Reading from the N-terminus, the 456-residue chain is Armadillo repeat-containing X-linked protein 1 (456 aa).

At 1–6 (MGRTRE) the chain is on the mitochondrial intermembrane side. Mitochondrion outer membrane (MOM)-targeting sequence regions lie at residues 1–6 (MGRTRE) and 26–36 (RLTWGKDENEK). Residues 7–29 (AGCVAAGMVIGAGACYCVYRLTW) traverse the membrane as a helical; Signal-anchor segment. The Cytoplasmic portion of the chain corresponds to 30 to 456 (GKDENEKLWD…VKVLKVLTKL (427 aa)). 2 disordered regions span residues 37–106 (LWDE…SGGG) and 139–186 (RTLT…APAT). Residues 38-50 (WDEEEEEEEEEEE) show a composition bias toward acidic residues. Basic and acidic residues-rich tracts occupy residues 51–62 (KSCSDKTEKELK) and 72–81 (KPQDDSKSKV). Residues 162–180 (SRARNRTSGKVKRKNRSKS) are compositionally biased toward basic residues. ARM repeat units follow at residues 198-238 (PYKI…NNAA), 240-279 (SFNQNAIRELGGVPIIAKLIKTRDPIIREKTYNALNNLSV), 361-401 (PAMT…NIND), and 418-456 (SSLFFLFKESGVCVKKIKALASHKDLVVKVKVLKVLTKL).

It belongs to the eutherian X-chromosome-specific Armcx family. In terms of assembly, interacts with MIRO1. Widely expressed in the adult nervous tissue, especially in the forebrain, including the cerebral cortex, hippocampus and thalamus.

It is found in the mitochondrion. The protein localises to the mitochondrion outer membrane. Its function is as follows. Regulates mitochondrial transport during axon regeneration. Increases the proportion of motile mitochondria by recruiting stationary mitochondria into the motile pool. Enhances mitochondria movement and neurite growth in both adult axons and embryonic neurons. Promotes neuronal survival and axon regeneration after nerve injury. May link mitochondria to the Trak1-kinesin motor complex via its interaction with Miro1. The polypeptide is Armadillo repeat-containing X-linked protein 1 (Armcx1) (Mus musculus (Mouse)).